The sequence spans 477 residues: Polyketide synthase-related protein Dhc1 (477 aa).

The Carrier domain occupies 34–112 (EKMTVREGEL…AMTHCVFDRA (79 aa)). S72 bears the O-(pantetheine 4'-phosphoryl)serine mark. The tract at residues 161–322 (LTGATSFLGS…AGEVFLENLV (162 aa)) is ketoreductase (KR) domain. The disordered stretch occupies residues 410–435 (VQQQQQQQQRQSQPPRDDAADGSPTE). Low complexity predominate over residues 411–422 (QQQQQQQQRQSQ). Residues 424–435 (PRDDAADGSPTE) are compositionally biased toward basic and acidic residues.

Its pathway is mycotoxin biosynthesis. Functionally, polyketide synthase-related protein; part of the gene cluster that mediates the biosynthesis of 10,11-dehydrocurvularin, a prevalent fungal phytotoxin with heat shock response and immune-modulatory activities. The highly reducing polyketide synthase Dhc3 is responsible for biosynthesis up to the tetraketide stage. The non-reducing polyketide synthase Dhc5 then conducts four additional chain extension cycles, producing the unreduced part of the nascent octaketide from C-1 to C-8 in 10,11-dehydrocurvularin. The role of Dhc1 in 10,11-dehydrocurvularin biosynthesis has not been identified yet. The protein is Polyketide synthase-related protein Dhc1 of Alternaria cinerariae.